A 570-amino-acid chain; its full sequence is Periplasmic trehalase (570 aa).

A signal peptide spans 1–34; the sequence is MIPPEIRRSVLLQKAIKLALAGTLLTFASFSATA. Residues Arg159, 166 to 167, Asn203, 212 to 214, 284 to 286, and Gly317 each bind substrate; these read WD, RSQ, and RPE. Catalysis depends on proton donor/acceptor residues Asp319 and Glu503. Substrate is bound at residue Glu518. The interval 544 to 570 is disordered; sequence KPCDSVPSTRPASLSATPTKTPSAATQ. Over residues 554-570 the composition is skewed to low complexity; the sequence is PASLSATPTKTPSAATQ.

It belongs to the glycosyl hydrolase 37 family. In terms of assembly, monomer.

The protein resides in the periplasm. It carries out the reaction alpha,alpha-trehalose + H2O = alpha-D-glucose + beta-D-glucose. Functionally, provides the cells with the ability to utilize trehalose at high osmolarity by splitting it into glucose molecules that can subsequently be taken up by the phosphotransferase-mediated uptake system. The polypeptide is Periplasmic trehalase (Salmonella schwarzengrund (strain CVM19633)).